Consider the following 407-residue polypeptide: Arginine biosynthesis bifunctional protein ArgJ (407 aa).

Substrate is bound by residues Thr154, Lys180, Thr191, Glu278, Asn402, and Ser407. Thr191 acts as the Nucleophile in catalysis.

It belongs to the ArgJ family. As to quaternary structure, heterotetramer of two alpha and two beta chains.

The protein resides in the cytoplasm. It carries out the reaction N(2)-acetyl-L-ornithine + L-glutamate = N-acetyl-L-glutamate + L-ornithine. The catalysed reaction is L-glutamate + acetyl-CoA = N-acetyl-L-glutamate + CoA + H(+). The protein operates within amino-acid biosynthesis; L-arginine biosynthesis; L-ornithine and N-acetyl-L-glutamate from L-glutamate and N(2)-acetyl-L-ornithine (cyclic): step 1/1. Its pathway is amino-acid biosynthesis; L-arginine biosynthesis; N(2)-acetyl-L-ornithine from L-glutamate: step 1/4. Its function is as follows. Catalyzes two activities which are involved in the cyclic version of arginine biosynthesis: the synthesis of N-acetylglutamate from glutamate and acetyl-CoA as the acetyl donor, and of ornithine by transacetylation between N(2)-acetylornithine and glutamate. In Psychrobacter arcticus (strain DSM 17307 / VKM B-2377 / 273-4), this protein is Arginine biosynthesis bifunctional protein ArgJ.